Here is a 44-residue protein sequence, read N- to C-terminus: Cytochrome b559 subunit beta (44 aa).

The helical transmembrane segment at 17 to 41 (VRWLAVHTLAVPSVFFVGAIAAMQF) threads the bilayer. Heme is bound by residues arginine 18 and histidine 23.

The protein belongs to the PsbE/PsbF family. As to quaternary structure, heterodimer of an alpha subunit and a beta subunit. PSII is composed of 1 copy each of membrane proteins PsbA, PsbB, PsbC, PsbD, PsbE, PsbF, PsbH, PsbI, PsbJ, PsbK, PsbL, PsbM, PsbT, PsbX, PsbY, PsbZ, Psb30/Ycf12, peripheral proteins PsbO, CyanoQ (PsbQ), PsbU, PsbV and a large number of cofactors. It forms dimeric complexes. Heme b is required as a cofactor.

It localises to the cellular thylakoid membrane. In terms of biological role, this b-type cytochrome is tightly associated with the reaction center of photosystem II (PSII). PSII is a light-driven water:plastoquinone oxidoreductase that uses light energy to abstract electrons from H(2)O, generating O(2) and a proton gradient subsequently used for ATP formation. It consists of a core antenna complex that captures photons, and an electron transfer chain that converts photonic excitation into a charge separation. The sequence is that of Cytochrome b559 subunit beta from Synechocystis sp. (strain ATCC 27184 / PCC 6803 / Kazusa).